The following is a 116-amino-acid chain: Photosystem II reaction center Psb28 protein (116 aa).

It belongs to the Psb28 family. Part of the photosystem II complex.

The protein localises to the plastid. Its subcellular location is the chloroplast thylakoid membrane. The polypeptide is Photosystem II reaction center Psb28 protein (Guillardia theta (Cryptophyte)).